Reading from the N-terminus, the 205-residue chain is Putative 3-methyladenine DNA glycosylase (205 aa).

This sequence belongs to the DNA glycosylase MPG family.

This chain is Putative 3-methyladenine DNA glycosylase, found in Staphylococcus epidermidis (strain ATCC 35984 / DSM 28319 / BCRC 17069 / CCUG 31568 / BM 3577 / RP62A).